Reading from the N-terminus, the 145-residue chain is Ribosomal RNA large subunit methyltransferase H (145 aa).

S-adenosyl-L-methionine-binding positions include Leu68, Gly95, and 113 to 118 (FSKMTF).

This sequence belongs to the RNA methyltransferase RlmH family. As to quaternary structure, homodimer.

Its subcellular location is the cytoplasm. The catalysed reaction is pseudouridine(1915) in 23S rRNA + S-adenosyl-L-methionine = N(3)-methylpseudouridine(1915) in 23S rRNA + S-adenosyl-L-homocysteine + H(+). Functionally, specifically methylates the pseudouridine at position 1915 (m3Psi1915) in 23S rRNA. This is Ribosomal RNA large subunit methyltransferase H from Mycoplasmopsis pulmonis (strain UAB CTIP) (Mycoplasma pulmonis).